The primary structure comprises 215 residues: GTP-binding nuclear protein ran-1 (215 aa).

The Small GTPase Ran-type domain occupies 6 to 170; the sequence is GIPTFKLVLV…LWLARKLLGD (165 aa). A GTP-binding site is contributed by 17–24; it reads DGGTGKTT. Residues 36–44 are switch-I; it reads KKYVATLGV. GTP is bound by residues glycine 67, 121 to 124, and 149 to 151; these read NKVD and SAK. The switch-II stretch occupies residues 67–83; that stretch reads GQEKFGGLRDGYYIQGQ.

This sequence belongs to the small GTPase superfamily. Ran family. In terms of assembly, found in a nuclear export complex with RanGTP, exportin and pre-miRNA.

The protein localises to the nucleus. It is found in the chromosome. The protein resides in the centromere. It localises to the kinetochore. Its function is as follows. Ran GTPase system comprises ran-1, ran-2 and ran-3 and is essential in nucleocytoplasmic transport. Ran-1 is a GTP-binding protein that mediates the interaction between mitotic chromosomes and kinetochore microtubules. Plays a crucial role in nuclear envelope assembly at the end of each cell division. Required for the import of protein into the nucleus and also for RNA export. RCC1 (ran-3)/Ran (ran-1) complex (together with other proteins) acts as a component of a signal transmission pathway that detects unreplicated DNA. This chain is GTP-binding nuclear protein ran-1 (ran-1), found in Caenorhabditis elegans.